A 722-amino-acid chain; its full sequence is Biotin--protein ligase (722 aa).

The tract at residues 27–93 is disordered; sequence KELGKASDKQ…EPAADGDPGL (67 aa). A compositionally biased stretch (low complexity) spans 46-55; it reads ASPEAQPAQG. S295 bears the Phosphoserine mark. One can recognise a BPL/LPL catalytic domain in the interval 459-648; sequence TRLGKVILFA…VLEKLIDRFQ (190 aa).

It belongs to the biotin--protein ligase family. As to quaternary structure, monomer.

Its subcellular location is the cytoplasm. The protein localises to the mitochondrion. The enzyme catalyses apo-[methylmalonyl-CoA:pyruvate carboxytransferase] + biotin + ATP = holo-[methylmalonyl-CoA:pyruvate carboxytransferase] + AMP + diphosphate + H(+). The catalysed reaction is apo-[propionyl-CoA:carbon-dioxide ligase (ADP-forming)] + biotin + ATP = holo-[propionyl-CoA:carbon-dioxide ligase (ADP-forming)] + AMP + diphosphate + H(+). It carries out the reaction apo-[3-methylcrotonoyl-CoA:carbon-dioxide ligase (ADP-forming)] + biotin + ATP = holo-[3-methylcrotonoyl-CoA:carbon-dioxide ligase (ADP-forming)] + AMP + diphosphate + H(+). It catalyses the reaction biotin + L-lysyl-[protein] + ATP = N(6)-biotinyl-L-lysyl-[protein] + AMP + diphosphate + H(+). Biotin--protein ligase catalyzing the biotinylation of the 4 biotin-dependent carboxylases acetyl-CoA-carboxylase, pyruvate carboxylase, propionyl-CoA carboxylase, and methylcrotonyl-CoA carboxylase. The protein is Biotin--protein ligase of Mus musculus (Mouse).